The chain runs to 97 residues: Cell division topological specificity factor (97 aa).

This sequence belongs to the MinE family.

Prevents the cell division inhibition by proteins MinC and MinD at internal division sites while permitting inhibition at polar sites. This ensures cell division at the proper site by restricting the formation of a division septum at the midpoint of the long axis of the cell. The chain is Cell division topological specificity factor from Rhodospirillum centenum (strain ATCC 51521 / SW).